We begin with the raw amino-acid sequence, 479 residues long: Transcript termination protein A18 (479 aa).

A Helicase ATP-binding domain is found at 99–255; it reads KNKHKRPTYI…NDIINVSNSL (157 aa). ATP is bound at residue 112–119; the sequence is LACGFGKT. A DESH box motif is present at residues 205–208; the sequence is DESH. Positions 308-469 constitute a Helicase C-terminal domain; it reads ILDTIIYDFN…EKKGKKKELA (162 aa).

This sequence belongs to the helicase family. Poxviruses subfamily. Interacts with G2. Might be part of a transcription complex composed at least of G2, A18, and H5.

The protein resides in the virion. In terms of biological role, DNA helicase which seems to act as a postreplicative transcription termination factor. Involved in ATP-dependent release of nascent RNA. Forms a stable complex with single-stranded DNA, and to a lesser extent RNA. The chain is Transcript termination protein A18 from Homo sapiens (Human).